Reading from the N-terminus, the 151-residue chain is RNA polymerase-binding transcription factor DksA (151 aa).

4 residues coordinate Zn(2+): Cys-114, Cys-117, Cys-135, and Cys-138. The dksA C4-type zinc finger occupies 114–138 (CNSCAVEIGIRRLEARPTANLCIDC).

It belongs to the DksA family. As to quaternary structure, interacts directly with the RNA polymerase.

The protein localises to the cytoplasm. Transcription factor that acts by binding directly to the RNA polymerase (RNAP). Required for negative regulation of rRNA expression and positive regulation of several amino acid biosynthesis promoters. Also required for regulation of fis expression. The protein is RNA polymerase-binding transcription factor DksA of Buchnera aphidicola subsp. Schizaphis graminum (strain Sg).